A 178-amino-acid chain; its full sequence is Bifunctional protein PyrR (178 aa).

Residues 97–109 (VVLVDDVLYTGRT) carry the PRPP-binding motif.

This sequence belongs to the purine/pyrimidine phosphoribosyltransferase family. PyrR subfamily.

It catalyses the reaction UMP + diphosphate = 5-phospho-alpha-D-ribose 1-diphosphate + uracil. Its function is as follows. Regulates the transcription of the pyrimidine nucleotide (pyr) operon in response to exogenous pyrimidines. Functionally, also displays a weak uracil phosphoribosyltransferase activity which is not physiologically significant. The protein is Bifunctional protein PyrR of Herpetosiphon aurantiacus (strain ATCC 23779 / DSM 785 / 114-95).